Reading from the N-terminus, the 678-residue chain is NADPH--cytochrome P450 reductase (678 aa).

G2 is modified (N-acetylglycine). Residues 2–22 are Lumenal-facing; that stretch reads GDSHEDTSATMPEAVAEEVSL. The chain crosses the membrane as a helical span at residues 23–43; the sequence is FSTTDMVLFSLIVGVLTYWFI. Residues 44 to 678 are Cytoplasmic-facing; sequence FRKKKEEIPE…KGRYSLDVWS (635 aa). The 145-residue stretch at 80 to 224 folds into the Flavodoxin-like domain; sequence IIVFYGSQTG…DFITWREQFW (145 aa). FMN contacts are provided by residues 86-91, 138-141, 173-182, and D208; these read SQTGTA, ATYG, and LGNKTYEHFN. In terms of domain architecture, FAD-binding FR-type spans 279–521; the sequence is KNPFLAAVTA…FVRKSQFRLP (243 aa). Position 298 (R298) interacts with NADP(+). Residues R424, 454-457, 472-474, Y478, and 488-491 contribute to the FAD site; these read RYYS, CAV, and GVAT. Residues T535, 596-597, 602-606, and D639 each bind NADP(+); these read SR and KVYVQ. W677 provides a ligand contact to FAD.

It belongs to the NADPH--cytochrome P450 reductase family. This sequence in the N-terminal section; belongs to the flavodoxin family. The protein in the C-terminal section; belongs to the flavoprotein pyridine nucleotide cytochrome reductase family. FAD is required as a cofactor. The cofactor is FMN.

The protein localises to the endoplasmic reticulum membrane. It carries out the reaction 2 oxidized [cytochrome P450] + NADPH = 2 reduced [cytochrome P450] + NADP(+) + H(+). Functionally, this enzyme is required for electron transfer from NADP to cytochrome P450 in microsomes. It can also provide electron transfer to heme oxygenase and cytochrome B5. The polypeptide is NADPH--cytochrome P450 reductase (Rattus norvegicus (Rat)).